A 191-amino-acid chain; its full sequence is MKNQYIDNLILNLKKLPGVGTKQAEKISFFLLKQNENEVEQIINSIVDLKKNIKECQNCNFLQSNNICHFCMDKSRNKQLMIFETTSDALKFEKLGIYRGKYFIIKNLIENVKNANEPKWKDKLLHYASNFEEIIIALNPTIEGQITSNYIKVILEEVALKVTKLAQGLPINSQIDYIDPITLNLSFENRK.

The C4-type zinc finger occupies cysteine 56–cysteine 71. Positions lysine 78–proline 170 constitute a Toprim domain.

This sequence belongs to the RecR family.

May play a role in DNA repair. It seems to be involved in an RecBC-independent recombinational process of DNA repair. It may act with RecF and RecO. In Mycoplasmopsis pulmonis (strain UAB CTIP) (Mycoplasma pulmonis), this protein is Recombination protein RecR.